The chain runs to 80 residues: UPF0291 protein llmg_1475 (80 aa).

Belongs to the UPF0291 family.

It is found in the cytoplasm. The sequence is that of UPF0291 protein llmg_1475 from Lactococcus lactis subsp. cremoris (strain MG1363).